A 128-amino-acid chain; its full sequence is Aspartate 1-decarboxylase (128 aa).

Ser-25 serves as the catalytic Schiff-base intermediate with substrate; via pyruvic acid. Ser-25 carries the pyruvic acid (Ser) modification. Thr-57 is a binding site for substrate. Tyr-58 acts as the Proton donor in catalysis. 73–75 (GAA) lines the substrate pocket.

It belongs to the PanD family. As to quaternary structure, heterooctamer of four alpha and four beta subunits. Requires pyruvate as cofactor. In terms of processing, is synthesized initially as an inactive proenzyme, which is activated by self-cleavage at a specific serine bond to produce a beta-subunit with a hydroxyl group at its C-terminus and an alpha-subunit with a pyruvoyl group at its N-terminus.

Its subcellular location is the cytoplasm. The catalysed reaction is L-aspartate + H(+) = beta-alanine + CO2. It participates in cofactor biosynthesis; (R)-pantothenate biosynthesis; beta-alanine from L-aspartate: step 1/1. In terms of biological role, catalyzes the pyruvoyl-dependent decarboxylation of aspartate to produce beta-alanine. This Chlorobaculum parvum (strain DSM 263 / NCIMB 8327) (Chlorobium vibrioforme subsp. thiosulfatophilum) protein is Aspartate 1-decarboxylase.